The sequence spans 163 residues: Large ribosomal subunit protein uL11 (163 aa).

The interval 1–25 (MAGTIEVLVAGGQADPGPPLGPELG) is disordered.

It belongs to the universal ribosomal protein uL11 family. As to quaternary structure, part of the ribosomal stalk of the 50S ribosomal subunit. Interacts with L10 and the large rRNA to form the base of the stalk. L10 forms an elongated spine to which L12 dimers bind in a sequential fashion forming a multimeric L10(L12)X complex.

In terms of biological role, forms part of the ribosomal stalk which helps the ribosome interact with GTP-bound translation factors. This chain is Large ribosomal subunit protein uL11, found in Natronomonas pharaonis (strain ATCC 35678 / DSM 2160 / CIP 103997 / JCM 8858 / NBRC 14720 / NCIMB 2260 / Gabara) (Halobacterium pharaonis).